Consider the following 447-residue polypeptide: Tubulin beta chain (447 aa).

Residues glutamine 11, glutamate 69, serine 138, glycine 142, threonine 143, glycine 144, asparagine 204, and asparagine 226 each coordinate GTP. Glutamate 69 is a Mg(2+) binding site. Positions 427–447 (DAGIDEEEEEYEEELPLEGEE) are disordered. Residues 429-447 (GIDEEEEEYEEELPLEGEE) show a composition bias toward acidic residues.

Belongs to the tubulin family. In terms of assembly, dimer of alpha and beta chains. A typical microtubule is a hollow water-filled tube with an outer diameter of 25 nm and an inner diameter of 15 nM. Alpha-beta heterodimers associate head-to-tail to form protofilaments running lengthwise along the microtubule wall with the beta-tubulin subunit facing the microtubule plus end conferring a structural polarity. Microtubules usually have 13 protofilaments but different protofilament numbers can be found in some organisms and specialized cells. Mg(2+) is required as a cofactor.

It is found in the cytoplasm. Its subcellular location is the cytoskeleton. Tubulin is the major constituent of microtubules, a cylinder consisting of laterally associated linear protofilaments composed of alpha- and beta-tubulin heterodimers. Microtubules grow by the addition of GTP-tubulin dimers to the microtubule end, where a stabilizing cap forms. Below the cap, tubulin dimers are in GDP-bound state, owing to GTPase activity of alpha-tubulin. In Hapsidospora chrysogena (Acremonium chrysogenum), this protein is Tubulin beta chain (TUB2).